The primary structure comprises 168 residues: Peptide deformylase 1 (168 aa).

Residues Cys-91 and His-133 each coordinate Fe cation. The active site involves Glu-134. His-137 provides a ligand contact to Fe cation.

Belongs to the polypeptide deformylase family. Fe(2+) serves as cofactor.

The enzyme catalyses N-terminal N-formyl-L-methionyl-[peptide] + H2O = N-terminal L-methionyl-[peptide] + formate. In terms of biological role, removes the formyl group from the N-terminal Met of newly synthesized proteins. Requires at least a dipeptide for an efficient rate of reaction. N-terminal L-methionine is a prerequisite for activity but the enzyme has broad specificity at other positions. The protein is Peptide deformylase 1 of Vibrio vulnificus (strain YJ016).